The chain runs to 160 residues: Transcription elongation factor GreA (160 aa).

Positions 12-76 form a coiled coil; sequence EGVKKLEEEL…QLENMLKNAS (65 aa).

This sequence belongs to the GreA/GreB family.

In terms of biological role, necessary for efficient RNA polymerase transcription elongation past template-encoded arresting sites. The arresting sites in DNA have the property of trapping a certain fraction of elongating RNA polymerases that pass through, resulting in locked ternary complexes. Cleavage of the nascent transcript by cleavage factors such as GreA or GreB allows the resumption of elongation from the new 3'terminus. GreA releases sequences of 2 to 3 nucleotides. The polypeptide is Transcription elongation factor GreA (Clostridium botulinum (strain Hall / ATCC 3502 / NCTC 13319 / Type A)).